We begin with the raw amino-acid sequence, 130 residues long: Small ribosomal subunit protein uS9 (130 aa).

It belongs to the universal ribosomal protein uS9 family.

This chain is Small ribosomal subunit protein uS9, found in Stutzerimonas stutzeri (strain A1501) (Pseudomonas stutzeri).